Reading from the N-terminus, the 207-residue chain is Guanylate kinase (207 aa).

The 181-residue stretch at 4 to 184 (GTLYIVSAPS…ALTDLKTIIR (181 aa)) folds into the Guanylate kinase-like domain. 11–18 (APSGAGKS) contributes to the ATP binding site.

Belongs to the guanylate kinase family.

The protein localises to the cytoplasm. It carries out the reaction GMP + ATP = GDP + ADP. In terms of biological role, essential for recycling GMP and indirectly, cGMP. In Escherichia coli O157:H7, this protein is Guanylate kinase.